The primary structure comprises 297 residues: 2-phospho-L-lactate transferase (297 aa).

7,8-didemethyl-8-hydroxy-5-deazariboflavin is bound at residue D49.

Belongs to the CofD family. In terms of assembly, homodimer. It depends on Mg(2+) as a cofactor.

The catalysed reaction is (2S)-lactyl-2-diphospho-5'-guanosine + 7,8-didemethyl-8-hydroxy-5-deazariboflavin = oxidized coenzyme F420-0 + GMP + H(+). It participates in cofactor biosynthesis; coenzyme F420 biosynthesis. Catalyzes the transfer of the 2-phospholactate moiety from (2S)-lactyl-2-diphospho-5'-guanosine to 7,8-didemethyl-8-hydroxy-5-deazariboflavin (FO) with the formation of oxidized coenzyme F420-0 and GMP. The polypeptide is 2-phospho-L-lactate transferase (Methanospirillum hungatei JF-1 (strain ATCC 27890 / DSM 864 / NBRC 100397 / JF-1)).